Here is a 565-residue protein sequence, read N- to C-terminus: Wee1-like protein kinase 2 (565 aa).

Composition is skewed to basic and acidic residues over residues 1-12 (MGDNGDNKELKQ) and 26-52 (EGQK…DSEA). 2 disordered regions span residues 1 to 142 (MGDN…TPGP) and 169 to 189 (KSNG…EEGK). At Ser77 the chain carries Phosphoserine. Positions 173 to 175 (KRK) match the Nuclear localization signal motif. Residues 178–189 (RDLEEAGPEEGK) are compositionally biased toward basic and acidic residues. In terms of domain architecture, Protein kinase spans 214 to 492 (FLEVEKIGVG…TRSRVLCPSL (279 aa)). Residues 220–228 (IGVGEFGTV) and Lys243 contribute to the ATP site. The Nuclear export signal signature appears at 317–331 (KLKDILLQISLGLKY). The active-site Proton acceptor is the Asp341. Residues Asn346 and Asp382 each contribute to the Mg(2+) site. Positions 495-521 (TEELQQQLNLEKFKTATLERELKEVQR) form a coiled coil. Residues 518-565 (EVQRAQSSKEGQSSPGVTGTHTGSRSTRRLVGGKSAKSSSFTWGQSSP) form a disordered region. Polar residues-rich tracts occupy residues 521–534 (RAQS…SPGV) and 553–565 (AKSS…QSSP).

The protein belongs to the protein kinase superfamily. Ser/Thr protein kinase family. WEE1 subfamily. Post-translationally, phosphorylation leads to increase its activity. As to expression, ovary-specific.

It is found in the nucleus. It carries out the reaction L-tyrosyl-[protein] + ATP = O-phospho-L-tyrosyl-[protein] + ADP + H(+). Functionally, oocyte-specific protein tyrosine kinase that phosphorylates and inhibits CDK1 and acts as a key regulator of meiosis during both prophase I and metaphase II. Required to maintain meiotic arrest in oocytes during the germinal vesicle (GV) stage, a long period of quiescence at dictyate prophase I, by phosphorylating CDK1 at 'Tyr-15', leading to inhibit CDK1 activity and prevent meiotic reentry. Also required for metaphase II exit during egg activation by phosphorylating CDK1 at 'Tyr-15', to ensure exit from meiosis in oocytes and promote pronuclear formation. The protein is Wee1-like protein kinase 2 (WEE2) of Sus scrofa (Pig).